Reading from the N-terminus, the 535-residue chain is Ribonuclease Y (535 aa).

A helical membrane pass occupies residues 4–24 (IILLIVSALIGLILGYALISI). The interval 118-141 (ENLSSKEKVLDSKEQSLTDKSKHI) is disordered. The region spanning 225–285 (TITSVHLPDD…IRREIARMTL (61 aa)) is the KH domain. The 94-residue stretch at 351-444 (VLRHSVEVGK…VAAADALSSA (94 aa)) folds into the HD domain.

The protein belongs to the RNase Y family.

The protein resides in the cell membrane. Endoribonuclease that initiates mRNA decay. The chain is Ribonuclease Y from Streptococcus pyogenes serotype M1.